Consider the following 265-residue polypeptide: Urease accessory protein UreH (265 aa).

The protein belongs to the UreD family. UreH, UreF and UreG form a complex that acts as a GTP-hydrolysis-dependent molecular chaperone, activating the urease apoprotein by helping to assemble the nickel containing metallocenter of UreC. The UreE protein probably delivers the nickel.

The protein localises to the cytoplasm. Required for maturation of urease via the functional incorporation of the urease nickel metallocenter. The sequence is that of Urease accessory protein UreH from Helicobacter pylori (strain J99 / ATCC 700824) (Campylobacter pylori J99).